The chain runs to 59 residues: MGILDKVKNLLSQNADKVETVINKAGEFVDEQTQGNYSDAIHKLHDAASNVVGMSDQQS.

Antitoxin component of a type II toxin-antitoxin (TA) system. Upon expression in M.smegmatis neutralizes the effect of cognate toxin Rv0910. The sequence is that of Antitoxin Rv0909 from Mycobacterium tuberculosis (strain ATCC 25618 / H37Rv).